We begin with the raw amino-acid sequence, 445 residues long: GRAM domain-containing protein 2B (445 aa).

At methionine 1 the chain carries N-acetylmethionine. Residues 1–10 (MVKKPISSSD) are compositionally biased toward polar residues. Residues 1–119 (MVKKPISSSD…RKKSSSSSQY (119 aa)) are disordered. Residues 18–37 (PSSPKSSAGASHSSTDSPSS) are compositionally biased toward low complexity. Composition is skewed to polar residues over residues 56–68 (KSPTAQSPTSSVE) and 82–93 (SKSSFDGSNLLS). Positions 94–112 (DKNDCKTESKADSKTERKK) are enriched in basic and acidic residues. The GRAM domain maps to 123 to 190 (MHFHKLFLDV…FSVTLIKKTK (68 aa)). Phosphoserine is present on residues serine 238, serine 255, and serine 265. A disordered region spans residues 277–331 (DLEGYSSSGSQTPESENSRDFHVTESQTVLNVTKGETKPPRTDAHGSRAPDGKAK). The span at 281-291 (YSSSGSQTPES) shows a compositional bias: polar residues. The span at 311–330 (GETKPPRTDAHGSRAPDGKA) shows a compositional bias: basic and acidic residues.

The polypeptide is GRAM domain-containing protein 2B (Gramd2b) (Rattus norvegicus (Rat)).